A 398-amino-acid chain; its full sequence is Cathepsin E (398 aa).

The N-terminal stretch at 1-21 is a signal peptide; sequence MKPLFVLLLLLLLLDLAQAQG. A propeptide spans 22–58 (activation peptide); sequence VLHRVPLRRHQSLRKKLRAQGQLSDFWRSHNLDMIEF. The region spanning 80-394 is the Peptidase A1 domain; that stretch reads YFGTVSIGSP…DRGNNQVGLA (315 aa). An N-linked (GlcNAc...) asparagine glycan is attached at N92. The active site involves D98. 2 cysteine pairs are disulfide-bonded: C111–C116 and C274–C278. Residue D283 is part of the active site.

It belongs to the peptidase A1 family. Homodimer; disulfide-linked. In terms of processing, glycosylated. The nature of the carbohydrate chain varies between cell types. In brain microglia, the proenzyme contains a high mannose-type oligosaccharide, while the mature enzyme contains a complex-type oligosaccharide. In stomach and spleen, the mature enzyme contains a high mannose-type oligosaccharide. In erythrocyte membranes, the mature enzyme contains a complex-type oligosaccharide. In terms of tissue distribution, expressed abundantly in lymphocytes and macrophages of the thymus and spleen, and in the M cells of the intestine. In the brain, expression is limited to reactive microglial cells, the large pyrimidial neurons in the cerebral cortex, the CA1 and CA3 pyrimidial neurons of the hippocampus, the large neurons of the neostriatum, and the Purkinje neurons of the cerebellum.

The protein resides in the endosome. The catalysed reaction is Similar to cathepsin D, but slightly broader specificity.. May have a role in immune function. Probably involved in the processing of antigenic peptides during MHC class II-mediated antigen presentation. May play a role in activation-induced lymphocyte depletion in the thymus, and in neuronal degeneration and glial cell activation in the brain. This chain is Cathepsin E (Ctse), found in Rattus norvegicus (Rat).